Here is a 345-residue protein sequence, read N- to C-terminus: Ubiquinone biosynthesis O-methyltransferase, mitochondrial (345 aa).

The N-terminal 86 residues, methionine 1–tyrosine 86, are a transit peptide targeting the mitochondrion. Arginine 124 contacts S-adenosyl-L-methionine. N6-acetyllysine is present on residues lysine 143 and lysine 149. The S-adenosyl-L-methionine site is built by glycine 154 and aspartate 175. Lysine 196 is subject to N6-acetyllysine. Serine 222 lines the S-adenosyl-L-methionine pocket. Residues glutamate 223, glutamate 226, and histidine 227 each contribute to the Mg(2+) site.

This sequence belongs to the class I-like SAM-binding methyltransferase superfamily. UbiG/COQ3 family. Component of a multi-subunit COQ enzyme complex, composed of at least COQ3, COQ4, COQ5, COQ6, COQ7 and COQ9. The cofactor is Mg(2+).

It is found in the mitochondrion inner membrane. The catalysed reaction is 3,4-dihydroxy-5-(all-trans-decaprenyl)benzoate + S-adenosyl-L-methionine = 4-hydroxy-3-methoxy-5-(all-trans-decaprenyl)benzoate + S-adenosyl-L-homocysteine + H(+). It carries out the reaction a 3-demethylubiquinone + S-adenosyl-L-methionine = a ubiquinone + S-adenosyl-L-homocysteine. It catalyses the reaction 3-demethylubiquinol-10 + S-adenosyl-L-methionine = ubiquinol-10 + S-adenosyl-L-homocysteine + H(+). It participates in cofactor biosynthesis; ubiquinone biosynthesis. O-methyltransferase required for two non-consecutive steps during ubiquinone biosynthesis. Catalyzes the 2 O-methylation of 3,4-dihydroxy-5-(all-trans-decaprenyl)benzoic acid into 4-hydroxy-3-methoxy-5-(all-trans-decaprenyl)benzoic acid. Also catalyzes the last step of ubiquinone biosynthesis by mediating methylation of 3-demethylubiquinone into ubiquinone. Also able to mediate the methylation of 3-demethylubiquinol-10 into ubiquinol-10. The polypeptide is Ubiquinone biosynthesis O-methyltransferase, mitochondrial (Rattus norvegicus (Rat)).